The chain runs to 411 residues: Secretion apparatus protein BsaZ (411 aa).

4 helical membrane passes run 28-48 (IVALIVIATGALAAPALVDLT), 80-100 (IAAPFVLLCAAAGALPSLVQS), 137-157 (ALLYVGVFALTVRVFADLYHA), and 175-195 (IVLTVRLVLLFLLCALPVLIL). A disordered region spans residues 341 to 411 (AANRGGPPPE…APARTGDQNA (71 aa)). Residues 370 to 404 (DACADNAFPDDAPPGAAAPNAGSPDGPAPDGGAPA) are compositionally biased toward low complexity.

It belongs to the type III secretion exporter family.

Its subcellular location is the cell membrane. Part of the bsa type III secretion system, is involved in the intracellular replication of invading bacteria inside the host cell. Probably necessary for the lysis of the vacuole membrane and escape into the host cell cytoplasm. This is Secretion apparatus protein BsaZ (bsaZ) from Burkholderia pseudomallei (strain K96243).